Here is a 254-residue protein sequence, read N- to C-terminus: Allene oxide cyclase 1, chloroplastic (254 aa).

The transit peptide at 1–78 directs the protein to the chloroplast; that stretch reads MASSTISLQS…QNLGNTENPR (78 aa). Residues 44 to 56 are compositionally biased toward low complexity; that stretch reads SNGPGSSSPTSFT. The segment at 44 to 79 is disordered; that stretch reads SNGPGSSSPTSFTPKKKLTPTRALSQNLGNTENPRP. Positions 65–77 are enriched in polar residues; it reads RALSQNLGNTENP.

Belongs to the allene oxide cyclase family. Highly expressed in fully developed leaves.

Its subcellular location is the plastid. It localises to the chloroplast. The catalysed reaction is (9Z,13S,15Z)-12,13-epoxyoctadeca-9,11,15-trienoate = (9S,13S,15Z)-12-oxophyto-10,15-dienoate. Functionally, involved in the production of 12-oxo-phytodienoic acid (OPDA), a precursor of jasmonic acid. The polypeptide is Allene oxide cyclase 1, chloroplastic (AOC1) (Arabidopsis thaliana (Mouse-ear cress)).